The primary structure comprises 192 residues: uncharacterized protein (192 aa).

A Nudix hydrolase domain is found at 29 to 160; the sequence is QRQAAVLVPI…PLDIHRRGND (132 aa). Residues 67-89 carry the Nudix box motif; sequence GAVDNTDATLIAAALREAQEEVA. Residues Glu-83 and Glu-87 each coordinate Mg(2+).

The protein belongs to the Nudix hydrolase family. PCD1 subfamily. It depends on Mn(2+) as a cofactor. The cofactor is Mg(2+).

Functionally, probably mediates the hydrolysis of some nucleoside diphosphate derivatives. This is an uncharacterized protein from Klebsiella pneumoniae (strain 342).